We begin with the raw amino-acid sequence, 309 residues long: MKIEPIAFESLGVRSQATLVETKDVRILIDPAVSLAPRRYGLPPHRIEVDTLVELAKKITEKAREADVLIVTHYHYDHHDPGYVVPKEIYRDKVVLVKNPESYINPSQGKVRAPKFLRAIKGLPKEISYADGKEYRFGNTRILVSHPVPHGADVRLGYVIQVFIKDGDSSVLFTSDVEGVPSEEHVKFTLDTKPNFLVIDGPLSYLVGRALTEDQLQVSVKNMERLAKSGLETMVVDHHVLRDLKYREVLSGLYDVAKSSGVKVTTAAEILGRETLQLEAKRRELFAQDNSPAKIPRNLASLLRIDQEG.

The protein belongs to the UPF0282 family.

The polypeptide is UPF0282 protein Msed_0584 (Metallosphaera sedula (strain ATCC 51363 / DSM 5348 / JCM 9185 / NBRC 15509 / TH2)).